The chain runs to 409 residues: Peptidase T (409 aa).

Residue His78 coordinates Zn(2+). Asp80 is an active-site residue. A Zn(2+)-binding site is contributed by Asp140. The Proton acceptor role is filled by Glu173. Zn(2+)-binding residues include Glu174, Asp196, and His379.

This sequence belongs to the peptidase M20B family. Zn(2+) is required as a cofactor.

The protein resides in the cytoplasm. The catalysed reaction is Release of the N-terminal residue from a tripeptide.. Cleaves the N-terminal amino acid of tripeptides. The sequence is that of Peptidase T from Salmonella agona (strain SL483).